A 111-amino-acid polypeptide reads, in one-letter code: Prefoldin subunit 2 (111 aa).

Coiled-coil stretches lie at residues 1–36 (MEQR…KDEH) and 72–92 (LETK…TLIQ).

It belongs to the prefoldin subunit beta family. Heterohexamer of two PFD-alpha type and four PFD-beta type subunits.

It is found in the cytoplasm. Binds specifically to cytosolic chaperonin (c-CPN) and transfers target proteins to it. Binds to nascent polypeptide chain and promotes folding in an environment in which there are many competing pathways for nonnative proteins. The chain is Prefoldin subunit 2 (GIM4) from Saccharomyces cerevisiae (strain ATCC 204508 / S288c) (Baker's yeast).